The primary structure comprises 75 residues: Small ribosomal subunit protein bS18 (75 aa).

Belongs to the bacterial ribosomal protein bS18 family. Part of the 30S ribosomal subunit. Forms a tight heterodimer with protein bS6.

Its function is as follows. Binds as a heterodimer with protein bS6 to the central domain of the 16S rRNA, where it helps stabilize the platform of the 30S subunit. This Aliivibrio fischeri (strain ATCC 700601 / ES114) (Vibrio fischeri) protein is Small ribosomal subunit protein bS18.